The primary structure comprises 687 residues: Protein SDA1 homolog (687 aa).

3 disordered regions span residues 517–549 (SSDEEQEDEDPSGENQEGEEDGQTRAARISQMR), 561–587 (MKQLTKEVQPKLGKKRKRATTTEEPQG), and 615–687 (TVIA…KSKI). Positions 520–537 (EEQEDEDPSGENQEGEED) are enriched in acidic residues. Over residues 644-666 (EKRRKKNFMMMRHNKLVRGKTKR) the composition is skewed to basic residues. Over residues 667 to 680 (SFRDKQIALRDSLL) the composition is skewed to basic and acidic residues.

Belongs to the SDA1 family.

It localises to the nucleus. It is found in the nucleolus. In terms of biological role, required for 60S pre-ribosomal subunits export to the cytoplasm. This chain is Protein SDA1 homolog (sdad1), found in Nematostella vectensis (Starlet sea anemone).